Reading from the N-terminus, the 332-residue chain is Tyrosine--tRNA ligase (332 aa).

L-tyrosine is bound by residues Y32, Y156, Q160, D163, and Q178. A 'KMSKS' region motif is present at residues 219–223 (KMSKS). Residue K222 participates in ATP binding.

It belongs to the class-I aminoacyl-tRNA synthetase family. TyrS type 4 subfamily. Homodimer.

Its subcellular location is the cytoplasm. The catalysed reaction is tRNA(Tyr) + L-tyrosine + ATP = L-tyrosyl-tRNA(Tyr) + AMP + diphosphate + H(+). In terms of biological role, catalyzes the attachment of tyrosine to tRNA(Tyr) in a two-step reaction: tyrosine is first activated by ATP to form Tyr-AMP and then transferred to the acceptor end of tRNA(Tyr). The protein is Tyrosine--tRNA ligase of Thermoplasma acidophilum (strain ATCC 25905 / DSM 1728 / JCM 9062 / NBRC 15155 / AMRC-C165).